Consider the following 208-residue polypeptide: Uracil phosphoribosyltransferase (208 aa).

5-phospho-alpha-D-ribose 1-diphosphate is bound by residues R78, R103, and 130–138 (DPMLATGGS). Uracil is bound by residues I193 and 198–200 (GDA). D199 serves as a coordination point for 5-phospho-alpha-D-ribose 1-diphosphate.

It belongs to the UPRTase family. It depends on Mg(2+) as a cofactor.

The enzyme catalyses UMP + diphosphate = 5-phospho-alpha-D-ribose 1-diphosphate + uracil. It participates in pyrimidine metabolism; UMP biosynthesis via salvage pathway; UMP from uracil: step 1/1. With respect to regulation, allosterically activated by GTP. Its function is as follows. Catalyzes the conversion of uracil and 5-phospho-alpha-D-ribose 1-diphosphate (PRPP) to UMP and diphosphate. The chain is Uracil phosphoribosyltransferase from Pectobacterium carotovorum subsp. carotovorum (strain PC1).